A 218-amino-acid chain; its full sequence is NAD(P)H-quinone oxidoreductase subunit I (218 aa).

4Fe-4S ferredoxin-type domains lie at 55–84 (GRIH…VDWV) and 95–124 (RNYS…MTEE). The [4Fe-4S] cluster site is built by Cys-64, Cys-67, Cys-70, Cys-74, Cys-104, Cys-107, Cys-110, and Cys-114. Residues 169-218 (MDPHDVPANQPRAGQLPAEALKSLSLQQESVQGDEGESLQDASDQDQPSG) form a disordered region. Positions 208 to 218 (QDASDQDQPSG) are enriched in polar residues.

It belongs to the complex I 23 kDa subunit family. NDH-1 is composed of at least 11 different subunits. It depends on [4Fe-4S] cluster as a cofactor.

The protein localises to the cellular thylakoid membrane. It carries out the reaction a plastoquinone + NADH + (n+1) H(+)(in) = a plastoquinol + NAD(+) + n H(+)(out). The enzyme catalyses a plastoquinone + NADPH + (n+1) H(+)(in) = a plastoquinol + NADP(+) + n H(+)(out). In terms of biological role, NDH-1 shuttles electrons from an unknown electron donor, via FMN and iron-sulfur (Fe-S) centers, to quinones in the respiratory and/or the photosynthetic chain. The immediate electron acceptor for the enzyme in this species is believed to be plastoquinone. Couples the redox reaction to proton translocation, and thus conserves the redox energy in a proton gradient. This is NAD(P)H-quinone oxidoreductase subunit I from Prochlorococcus marinus (strain MIT 9313).